The primary structure comprises 85 residues: uncharacterized protein (85 aa).

3 helical membrane passes run Leu-4–Ala-24, Ser-27–Glu-47, and Arg-61–Ala-81.

The protein localises to the cell membrane. This is an uncharacterized protein from Pseudomonas aeruginosa (strain ATCC 15692 / DSM 22644 / CIP 104116 / JCM 14847 / LMG 12228 / 1C / PRS 101 / PAO1).